The chain runs to 203 residues: Chaperonin-like RbcX protein 2, chloroplastic (203 aa).

The transit peptide at 1-78 (MVSAWFVVGS…RKSKKLLIVN (78 aa)) directs the protein to the chloroplast.

This sequence belongs to the RbcX family. Homodimer. Interacts with rbcL, atpB and RBCS-1B.

The protein resides in the plastid. Its subcellular location is the chloroplast stroma. In terms of biological role, chaperone involved in RuBisCO assembly process. The protein is Chaperonin-like RbcX protein 2, chloroplastic of Arabidopsis thaliana (Mouse-ear cress).